The primary structure comprises 185 residues: MLNELFNECETKMKSSVNHMLRDFKTLRTGKVTTSVLDNVKIDYYGTLTALDQVGSILVADATTIIINPWEKNLLNIIDSAISKANIGATPNNDGSQIKLFFPAMTVEQRQESVKQMKGMGEHAKVAVRNDRKNANDKIKKSEKDKEITADESKSAQDNIQKITDKYISEIDSILKTKEAEILKV.

Over residues 131 to 155 (DRKNANDKIKKSEKDKEITADESKS) the composition is skewed to basic and acidic residues. The disordered stretch occupies residues 131–156 (DRKNANDKIKKSEKDKEITADESKSA).

It belongs to the RRF family.

The protein resides in the cytoplasm. Functionally, responsible for the release of ribosomes from messenger RNA at the termination of protein biosynthesis. May increase the efficiency of translation by recycling ribosomes from one round of translation to another. The polypeptide is Ribosome-recycling factor (Sulfurimonas denitrificans (strain ATCC 33889 / DSM 1251) (Thiomicrospira denitrificans (strain ATCC 33889 / DSM 1251))).